A 92-amino-acid polypeptide reads, in one-letter code: Acylphosphatase (92 aa).

C5 and C49 are disulfide-bonded. The Acylphosphatase-like domain maps to 5–92; that stretch reads CIIAWVYGRV…SGELTDFRIR (88 aa). Catalysis depends on residues R20 and N38.

Belongs to the acylphosphatase family.

It catalyses the reaction an acyl phosphate + H2O = a carboxylate + phosphate + H(+). The protein is Acylphosphatase of Escherichia coli O157:H7.